The following is a 478-amino-acid chain: Melanopsin (478 aa).

Residues M1–T14 are compositionally biased toward pro residues. The interval M1 to S32 is disordered. Topologically, residues M1–T72 are extracellular. A helical transmembrane segment spans residues L73–Y93. The Cytoplasmic portion of the chain corresponds to T94–M107. A helical membrane pass occupies residues F108–F128. Residues T129–E144 are Extracellular-facing. C143 and C221 form a disulfide bridge. A helical transmembrane segment spans residues F145 to A165. Residues L166 to A188 lie on the Cytoplasmic side of the membrane. A helical membrane pass occupies residues F189 to W209. Over S210 to L238 the chain is Extracellular. A helical membrane pass occupies residues L239–F259. At R260 to K296 the chain is on the cytoplasmic side. A helical transmembrane segment spans residues I297–L317. Topologically, residues V318–S332 are extracellular. The chain crosses the membrane as a helical span at residues S333 to T353. K340 carries the N6-(retinylidene)lysine modification. Topologically, residues H354–M478 are cytoplasmic. Residues L440–M478 form a disordered region. Positions L448–G465 are enriched in basic and acidic residues.

This sequence belongs to the G-protein coupled receptor 1 family. Opsin subfamily. In terms of tissue distribution, expressed in the retina.

The protein localises to the cell membrane. Its subcellular location is the cell projection. It localises to the axon. It is found in the dendrite. The protein resides in the perikaryon. Photoreceptor that binds cis-retinaldehydes. Contributes to pupillar reflex, photoentrainment and other non-image forming responses to light. May be involved in the optokinetic visual tracking response. May be involved in the regulation of retinal hyaloid vessel growth and regression. The protein is Melanopsin (OPN4) of Homo sapiens (Human).